A 146-amino-acid polypeptide reads, in one-letter code: Protein MGF 100-3L (146 aa).

This sequence belongs to the asfivirus MGF 100 family.

Functionally, plays a role in virus cell tropism, and may be required for efficient virus replication in macrophages. This Ornithodoros (relapsing fever ticks) protein is Protein MGF 100-3L.